A 203-amino-acid polypeptide reads, in one-letter code: Acid phosphatase (203 aa).

The active-site Tele-phosphohistidine intermediate is His-13. Glu-85 functions as the Proton donor/acceptor in the catalytic mechanism.

It belongs to the phosphoglycerate mutase family. As to quaternary structure, homodimer.

It carries out the reaction a phosphate monoester + H2O = an alcohol + phosphate. It catalyses the reaction beta-D-fructose 1,6-bisphosphate + H2O = beta-D-fructose 6-phosphate + phosphate. It functions in the pathway carbohydrate biosynthesis; gluconeogenesis. In contrast to classical FBPases, is resistant to inhibition by lithium. Its function is as follows. Phosphatase with a broad specificity. Can dephosphorylate a variety of substrates including phosphorylated sugars like fructose-6-phosphate (F6P). Is able to function in vivo as a fructose-1,6-bisphosphatase (FBPase) and to maintain gluconeogenesis when the classical FBPase GlpX is absent. Shows negligible phosphoglycerate mutase activity. Has no phosphatase activity against 3-phosphoglycerate, 2,3-bisphosphoglycerate, or hydrophobic substrates such as alpha-napthyl phosphate. In Mycobacterium tuberculosis (strain ATCC 25618 / H37Rv), this protein is Acid phosphatase.